We begin with the raw amino-acid sequence, 702 residues long: Elongation factor G (702 aa).

Residues 8–290 form the tr-type G domain; it reads TRYRNIGISA…AVIEYLPAPT (283 aa). GTP contacts are provided by residues 17–24, 88–92, and 142–145; these read AHIDAGKT, DTPGH, and NKMD.

The protein belongs to the TRAFAC class translation factor GTPase superfamily. Classic translation factor GTPase family. EF-G/EF-2 subfamily.

The protein localises to the cytoplasm. In terms of biological role, catalyzes the GTP-dependent ribosomal translocation step during translation elongation. During this step, the ribosome changes from the pre-translocational (PRE) to the post-translocational (POST) state as the newly formed A-site-bound peptidyl-tRNA and P-site-bound deacylated tRNA move to the P and E sites, respectively. Catalyzes the coordinated movement of the two tRNA molecules, the mRNA and conformational changes in the ribosome. This is Elongation factor G from Erwinia tasmaniensis (strain DSM 17950 / CFBP 7177 / CIP 109463 / NCPPB 4357 / Et1/99).